Reading from the N-terminus, the 186-residue chain is Ribosome-recycling factor (186 aa).

This sequence belongs to the RRF family.

The protein localises to the cytoplasm. Functionally, responsible for the release of ribosomes from messenger RNA at the termination of protein biosynthesis. May increase the efficiency of translation by recycling ribosomes from one round of translation to another. This Rickettsia peacockii (strain Rustic) protein is Ribosome-recycling factor.